Reading from the N-terminus, the 214-residue chain is Pyrrolidone-carboxylate peptidase (214 aa).

Active-site residues include glutamate 80, cysteine 143, and histidine 166.

It belongs to the peptidase C15 family. In terms of assembly, homotetramer.

Its subcellular location is the cytoplasm. The catalysed reaction is Release of an N-terminal pyroglutamyl group from a polypeptide, the second amino acid generally not being Pro.. Removes 5-oxoproline from various penultimate amino acid residues except L-proline. This is Pyrrolidone-carboxylate peptidase from Klebsiella pneumoniae (strain 342).